A 301-amino-acid chain; its full sequence is Phosphatidylglycerol--prolipoprotein diacylglyceryl transferase (301 aa).

A run of 3 helical transmembrane segments spans residues 17–37, 59–79, and 97–117; these read LAVRWYGLMYLVAFIAAIVVG, MLFYGVLGTILGGRLGYVLFY, and GGMSFHGGFLGVTLAMVLFAY. R142 is an a 1,2-diacyl-sn-glycero-3-phospho-(1'-sn-glycerol) binding site. Helical transmembrane passes span 230 to 250 and 265 to 285; these read MGAISAVFLIGYGLARFTVEF and LSMGQWLSLPMILVGIGLLVW.

This sequence belongs to the Lgt family.

Its subcellular location is the cell inner membrane. It catalyses the reaction L-cysteinyl-[prolipoprotein] + a 1,2-diacyl-sn-glycero-3-phospho-(1'-sn-glycerol) = an S-1,2-diacyl-sn-glyceryl-L-cysteinyl-[prolipoprotein] + sn-glycerol 1-phosphate + H(+). Its pathway is protein modification; lipoprotein biosynthesis (diacylglyceryl transfer). Functionally, catalyzes the transfer of the diacylglyceryl group from phosphatidylglycerol to the sulfhydryl group of the N-terminal cysteine of a prolipoprotein, the first step in the formation of mature lipoproteins. The chain is Phosphatidylglycerol--prolipoprotein diacylglyceryl transferase from Paraburkholderia xenovorans (strain LB400).